We begin with the raw amino-acid sequence, 600 residues long: Probable methyltransferase PMT21 (600 aa).

The Cytoplasmic portion of the chain corresponds to 1–16; it reads MKYKDEKYEKAEKGSR. Residues 17–37 form a helical; Signal-anchor for type II membrane protein membrane-spanning segment; the sequence is ILPKTVLLILLCGLSFYLGGL. Over 38-600 the chain is Lumenal; sequence YCGKNIIEVS…YSSNASSETN (563 aa). Residue asparagine 594 is glycosylated (N-linked (GlcNAc...) asparagine).

The protein belongs to the methyltransferase superfamily.

It is found in the endoplasmic reticulum membrane. The protein is Probable methyltransferase PMT21 (ERD3) of Arabidopsis thaliana (Mouse-ear cress).